A 254-amino-acid polypeptide reads, in one-letter code: tRNA 2'-phosphotransferase 1 (254 aa).

Met1 is modified (N-acetylmethionine). Disordered stretches follow at residues 1–30 (MNSFGGRRRETAGPKGRRAHRPPQDQDRDV) and 225–254 (RKPLSLAGNEEKEHQRDSKHSSRGRGMTQQ). Basic and acidic residues predominate over residues 233-244 (NEEKEHQRDSKH).

It belongs to the KptA/TPT1 family.

The enzyme catalyses 2'-phospho-[ligated tRNA] + NAD(+) = mature tRNA + ADP-alpha-D-ribose 1'',2''-cyclic phosphate + nicotinamide. In terms of biological role, catalyzes the last step of tRNA splicing, the transfer of the splice junction 2'-phosphate from ligated tRNA to NAD to produce ADP-ribose 1''-2'' cyclic phosphate. The polypeptide is tRNA 2'-phosphotransferase 1 (TRPT1) (Bos taurus (Bovine)).